The following is a 647-amino-acid chain: MADISIKFPDGAVKAFPAGTTPADVAKSISISLAKKAVAAKLDGQLVDYLTPLASDGSIEIVTKDSDDGLTVLRNTTAALLRIALKKEFPAIRLGKVSADEDGFFVDTDKDDQQVSVDELDALAVIVEKLVSDKLDIERITVSKADALADAKDDQFTTALINAVDGDSVPFLKIGDYQILSDGAQLTNTGDVKKFKLLSVAGAYWQGKSSNPMLQRIYGTAFYKQADLDADLARRQEARERDHRVIGNQLDLFFVDPKVGAGLPYWMPNGATIRRTIERYIIDKEVSNGYQHVYTPVLANLDLYKQSGHWAHYREDMFPPMDMGDGEMLELRPMNCPSHIQVYNHHIRSYRELPLRIAELGMMHRYEKSGALSGLQRVREMTLNDGHTFVAPEQIQDEFKSILDLMVKVYADFDIKDYTFRLSYRDPKNTEKYFDDDEMWNNAQAMLKGAMDDLGLPYVEAEGEAAFYGPKLDVQTKTALGNEETLSTIQLDFMLPERFDLHYVGADGEEHRPVMIHRGLVSTMERFTAYLTEIYKGAFPTWLAPKQVTIIPVSEEKHGAYADKLAAELKAADIRVNVDKRGEKMGYLIRDAQTHKIPYTLVVGEDEMSNGSVSVRKYGENQTTSMSSDAFVKEILADIASYSREND.

Positions 1–63 (MADISIKFPD…ASDGSIEIVT (63 aa)) constitute a TGS domain. The tract at residues 242–540 (DHRVIGNQLD…LTEIYKGAFP (299 aa)) is catalytic. The Zn(2+) site is built by cysteine 336, histidine 387, and histidine 517.

It belongs to the class-II aminoacyl-tRNA synthetase family. Homodimer. Requires Zn(2+) as cofactor.

The protein resides in the cytoplasm. It carries out the reaction tRNA(Thr) + L-threonine + ATP = L-threonyl-tRNA(Thr) + AMP + diphosphate + H(+). Functionally, catalyzes the attachment of threonine to tRNA(Thr) in a two-step reaction: L-threonine is first activated by ATP to form Thr-AMP and then transferred to the acceptor end of tRNA(Thr). Also edits incorrectly charged L-seryl-tRNA(Thr). This is Threonine--tRNA ligase from Levilactobacillus brevis (strain ATCC 367 / BCRC 12310 / CIP 105137 / JCM 1170 / LMG 11437 / NCIMB 947 / NCTC 947) (Lactobacillus brevis).